A 563-amino-acid chain; its full sequence is Arginine--tRNA ligase (563 aa).

Positions 121–131 (PNIAKPFSIGH) match the 'HIGH' region motif.

It belongs to the class-I aminoacyl-tRNA synthetase family. Monomer.

Its subcellular location is the cytoplasm. The catalysed reaction is tRNA(Arg) + L-arginine + ATP = L-arginyl-tRNA(Arg) + AMP + diphosphate. The chain is Arginine--tRNA ligase from Streptococcus pyogenes serotype M1.